A 479-amino-acid polypeptide reads, in one-letter code: GTPase Obg (479 aa).

The 158-residue stretch at 2 to 159 folds into the Obg domain; that stretch reads PRFVDRVVIH…RDLTLELKTV (158 aa). The OBG-type G domain occupies 160 to 340; that stretch reads ADVGLVGFPS…LIFGLWQMVS (181 aa). GTP-binding positions include 166-173, 191-195, 212-215, 292-295, and 321-323; these read GFPSAGKS, FTTLV, DVPG, NKID, and STV. Residues S173 and T193 each contribute to the Mg(2+) site. One can recognise an OCT domain in the interval 358–436; the sequence is PVPVDDSGFD…IGEMTFDWEP (79 aa). A disordered region spans residues 438-479; it reads TPAGGHVAMSGRGTDVRLERSDRVGAAERKAARRQRRERDDD. A compositionally biased stretch (basic and acidic residues) spans 451–467; sequence TDVRLERSDRVGAAERK.

Belongs to the TRAFAC class OBG-HflX-like GTPase superfamily. OBG GTPase family. In terms of assembly, monomer. The cofactor is Mg(2+).

It localises to the cytoplasm. Its function is as follows. An essential GTPase which binds GTP, GDP and possibly (p)ppGpp with moderate affinity, with high nucleotide exchange rates and a fairly low GTP hydrolysis rate. Plays a role in control of the cell cycle, stress response, ribosome biogenesis and in those bacteria that undergo differentiation, in morphogenesis control. This Mycobacterium ulcerans (strain Agy99) protein is GTPase Obg.